The primary structure comprises 267 residues: Large ribosomal subunit protein uL4 (267 aa).

It belongs to the universal ribosomal protein uL4 family. Part of the 50S ribosomal subunit.

In terms of biological role, one of the primary rRNA binding proteins, this protein initially binds near the 5'-end of the 23S rRNA. It is important during the early stages of 50S assembly. It makes multiple contacts with different domains of the 23S rRNA in the assembled 50S subunit and ribosome. Forms part of the polypeptide exit tunnel. In Saccharolobus islandicus (strain Y.N.15.51 / Yellowstone #2) (Sulfolobus islandicus), this protein is Large ribosomal subunit protein uL4.